A 685-amino-acid polypeptide reads, in one-letter code: Mannan-binding lectin serine protease 2 (685 aa).

An N-terminal signal peptide occupies residues 1-19; it reads MRLLIFLGLLWSLVATLLG. The 118-residue stretch at 20–137 folds into the CUB 1 domain; that stretch reads SKWPEPVFGR…TGFEAFYAAE (118 aa). Ca(2+)-binding residues include glutamate 67 and aspartate 75. Cysteine 72 and cysteine 90 form a disulfide bridge. Asparagine 103 carries an N-linked (GlcNAc...) asparagine glycan. Residues aspartate 120, serine 122, asparagine 123, aspartate 138, and glutamate 141 each coordinate Ca(2+). Residues 138-181 form the EGF-like; calcium-binding domain; it reads DVDECRVSLGDSVPCDHYCHNYLGGYYCSCRAGYVLHQNKHTCS. 5 cysteine pairs are disulfide-bonded: cysteine 142/cysteine 156, cysteine 152/cysteine 165, cysteine 167/cysteine 180, cysteine 184/cysteine 211, and cysteine 241/cysteine 259. Ca(2+) is bound by residues asparagine 158 and glycine 162. Asparagine 158 bears the (3R)-3-hydroxyasparagine mark. Residues 184-296 form the CUB 2 domain; sequence CSGQVFTGRS…TGWKIHYTST (113 aa). N-linked (GlcNAc...) asparagine glycosylation is found at asparagine 285 and asparagine 308. 2 Sushi domains span residues 298–363 and 364–431; these read RPCP…ECSI and IDCG…VCEP. Disulfide bonds link cysteine 300–cysteine 348, cysteine 328–cysteine 361, cysteine 366–cysteine 411, cysteine 396–cysteine 429, cysteine 433–cysteine 552, cysteine 598–cysteine 617, and cysteine 628–cysteine 659. Residues 444-683 form the Peptidase S1 domain; it reads IVGGQPAKPG…YIPWIENIIS (240 aa). Residues histidine 483 and aspartate 532 each act as charge relay system in the active site. Asparagine 545 carries N-linked (GlcNAc...) asparagine glycosylation. Serine 632 acts as the Charge relay system in catalysis. A glycan (N-linked (GlcNAc...) asparagine) is linked at asparagine 641.

Belongs to the peptidase S1 family. Homodimer; disulfide-linked. Binds MBL2. Isoform 2 binds to MASP1. Binds SERPING1. Post-translationally, the iron and 2-oxoglutarate dependent 3-hydroxylation of aspartate and asparagine is (R) stereospecific within EGF domains. Plasma.

It is found in the secreted. It catalyses the reaction Selective cleavage after Arg-223 in complement component C2 (-Ser-Leu-Gly-Arg-|-Lys-Ile-Gln-Ile) and after Arg-76 in complement component C4 (-Gly-Leu-Gln-Arg-|-Ala-Leu-Glu-Ile).. Its function is as follows. Serum protease that plays an important role in the activation of the complement system via mannose-binding lectin. After activation by auto-catalytic cleavage it cleaves C2 and C4, leading to their activation and to the formation of C3 convertase. The sequence is that of Mannan-binding lectin serine protease 2 (Masp2) from Mus musculus (Mouse).